A 264-amino-acid polypeptide reads, in one-letter code: Probable metallo-hydrolase YflN (264 aa).

His-80, His-82, Asp-84, His-85, His-169, Asp-188, and His-241 together coordinate Zn(2+).

It belongs to the metallo-beta-lactamase superfamily. Zn(2+) serves as cofactor.

The polypeptide is Probable metallo-hydrolase YflN (yflN) (Bacillus subtilis (strain 168)).